Reading from the N-terminus, the 264-residue chain is Indole-3-glycerol phosphate synthase (264 aa).

It belongs to the TrpC family.

It carries out the reaction 1-(2-carboxyphenylamino)-1-deoxy-D-ribulose 5-phosphate + H(+) = (1S,2R)-1-C-(indol-3-yl)glycerol 3-phosphate + CO2 + H2O. Its pathway is amino-acid biosynthesis; L-tryptophan biosynthesis; L-tryptophan from chorismate: step 4/5. The polypeptide is Indole-3-glycerol phosphate synthase (Xylella fastidiosa (strain M23)).